The chain runs to 103 residues: uncharacterized protein (103 aa).

Positions 1-10 are enriched in basic residues; it reads MVVKKSKPKN. 2 disordered regions span residues 1 to 38 and 77 to 103; these read MVVK…KGKK and AVFS…NEKK.

This is an uncharacterized protein from Schizosaccharomyces pombe (strain 972 / ATCC 24843) (Fission yeast).